A 776-amino-acid chain; its full sequence is MQPNSHIFVIITISSLIITVSAYGSTGTIAAAFGENGFFCAIDASGKQEVICWDRGNTNRSLNRPPGEISGYSPPMTSLSGGEGFLCAITSNTSRAFCWNLEDPSENLVPRAFQYNSYLQIASGNNHVCAISGLYYSGPDYGPVHCWEYSDNTNFTSGLLWNSSFHNPYIDSLMFRKIVSGDGFSCGVTKDGDLVCWGPKSNLLNFSNNEEFEVLASGRNSVCGVSKDSGQLHCFGDETEFGSLPNRPRFIALSAGANHYCGIREDDHGVECWGRNLNSSSSSSAPNTSGFVAISSSDSTTCGVRELDLVLDCWRVHDSSKADYSPPLELCSPGMCSPRGNCGDGWFAFNASILKESELTSLCSFHNLNICLRCGISCLEGYFPSSTCNPNADRVCTPCSLCQNSSCYGICKIRATKSKEHEQKEQREVRRLVIIIGCSVLGFLVMLIGLSFIPKMTKGSKRDDEERSKMTCCFCFDKNSVEADPDPVPHQSVLLPTAVSLGETKIFRLSELKDATHGFKEFNELGRGSFGFVYKAVLSDGIHVAVKRANAATIIHSNNRGFESELEILCKIRHNNIVNLLGYCSEMGERLLVYEYMPHGTLHDHLHGDLSQLDWSMRLKIMLQAARGLDYLHNEVDPPIIHRDVKTSNILLDGEMCARIADFGLVSSNERDSSNSDREGDVYDFGIVLLEILSGRKAIDRESDPAGIAEWAVPLIRKGKAAAIIDRNICLPRNVEPLLKLAELAELAVRENSNERPNIRNILCFLDLIVKSGLTF.

Positions 1-22 are cleaved as a signal peptide; that stretch reads MQPNSHIFVIITISSLIITVSA. The Extracellular portion of the chain corresponds to 23-432; sequence YGSTGTIAAA…QKEQREVRRL (410 aa). N-linked (GlcNAc...) asparagine glycosylation is found at Asn-59, Asn-92, Asn-154, Asn-162, Asn-205, Asn-278, Asn-287, and Asn-350. A TNFR-Cys repeat occupies 341–396; that stretch reads NCGDGWFAFNASILKESELTSLCSFHNLNICLRCGISCLEGYFPSSTCNPNADRVC. Intrachain disulfides connect Cys-342–Cys-371, Cys-374–Cys-388, and Cys-378–Cys-396. The N-linked (GlcNAc...) asparagine glycan is linked to Asn-404. The helical transmembrane segment at 433-453 threads the bilayer; it reads VIIIGCSVLGFLVMLIGLSFI. At 454–776 the chain is on the cytoplasmic side; the sequence is PKMTKGSKRD…DLIVKSGLTF (323 aa). The Protein kinase domain occupies 519 to 776; sequence FKEFNELGRG…DLIVKSGLTF (258 aa). ATP contacts are provided by residues 525-533 and Lys-547; that span reads LGRGSFGFV. The active-site Proton acceptor is Asp-644.

Belongs to the protein kinase superfamily. Ser/Thr protein kinase family. In terms of assembly, homodimer. In terms of tissue distribution, expressed in roots, leaves, shoot apical meristems (SAM), and floral buds.

It is found in the membrane. The catalysed reaction is L-seryl-[protein] + ATP = O-phospho-L-seryl-[protein] + ADP + H(+). It carries out the reaction L-threonyl-[protein] + ATP = O-phospho-L-threonyl-[protein] + ADP + H(+). Serine/threonine-protein kinase with low activity. This is Serine/threonine-protein kinase-like protein CCR2 (CCR2) from Arabidopsis thaliana (Mouse-ear cress).